The chain runs to 282 residues: Glutamate--LysW ligase ArgX (282 aa).

ATP contacts are provided by residues Lys-87, Lys-127, 131-137 (GSWGRLV), and 167-178 (QEYIQYKGRDIR). The region spanning 91-277 (YSKLYREGIP…VAQKLVEYIK (187 aa)) is the ATP-grasp domain. Residue Arg-192 participates in substrate binding. Asn-202 is a binding site for ATP. A substrate-binding site is contributed by 203–204 (VA). Asp-237, Glu-250, and Asn-252 together coordinate Mg(2+). 256 to 260 (EFKGF) is a binding site for substrate. The short motif at 259-260 (GF) is the GF motif that is essential for ArgX substrate specificity element.

This sequence belongs to the RimK family. LysX subfamily. As to quaternary structure, homotetramer. Interacts with LysW. Requires Mg(2+) as cofactor.

The enzyme catalyses [amino-group carrier protein]-C-terminal-L-glutamate + L-glutamate + ATP = [amino-group carrier protein]-C-terminal-gamma-(L-glutamyl)-L-glutamate + ADP + phosphate + H(+). It participates in amino-acid biosynthesis; L-arginine biosynthesis. In terms of biological role, catalyzes the ATP-dependent formation of a covalent bond between the amino group of glutamate and the gamma-carboxyl group of the C-terminal glutamate residue in LysW. The polypeptide is Glutamate--LysW ligase ArgX (Sulfurisphaera tokodaii (strain DSM 16993 / JCM 10545 / NBRC 100140 / 7) (Sulfolobus tokodaii)).